We begin with the raw amino-acid sequence, 386 residues long: NADH-ubiquinone oxidoreductase chain 4 (386 aa).

11 consecutive transmembrane segments (helical) span residues 8-28 (SEFH…YFLF), 37-57 (WPLS…LTFT), 61-81 (FILF…LILG), 91-111 (ASYY…FIII), 133-153 (IFLL…AHIW), 167-187 (MVLA…VQVL), 189-209 (IYSE…SCLI), 219-239 (LIAY…LMSC), 247-267 (ILMM…SYLF), 283-303 (ISLF…NMGL), and 315-335 (FFIG…ILCF).

It belongs to the complex I subunit 4 family.

It localises to the mitochondrion membrane. The catalysed reaction is a ubiquinone + NADH + 5 H(+)(in) = a ubiquinol + NAD(+) + 4 H(+)(out). Functionally, core subunit of the mitochondrial membrane respiratory chain NADH dehydrogenase (Complex I) that is believed to belong to the minimal assembly required for catalysis. Complex I functions in the transfer of electrons from NADH to the respiratory chain. The immediate electron acceptor for the enzyme is believed to be ubiquinone. The sequence is that of NADH-ubiquinone oxidoreductase chain 4 (ND4) from Artemia franciscana (Brine shrimp).